Here is a 690-residue protein sequence, read N- to C-terminus: Protein arginine N-methyltransferase 7 (690 aa).

SAM-dependent MTase PRMT-type domains follow at residues 14–357 (QNSW…YSLW) and 366–690 (TKSV…QKKL).

It belongs to the class I-like SAM-binding methyltransferase superfamily. Protein arginine N-methyltransferase family. PRMT7 subfamily.

Functionally, essential arginine methyltransferase that can both catalyze the formation of omega-N monomethylarginine (MMA) and symmetrical dimethylarginine (sDMA). Specifically mediates the symmetrical dimethylation of arginine residues in the small nuclear ribonucleoproteins SmD1 and SmD3. This Drosophila sechellia (Fruit fly) protein is Protein arginine N-methyltransferase 7 (Art7).